The primary structure comprises 671 residues: DNA ligase (671 aa).

Residues Asp32–Asp36, Ser81–Leu82, and Glu113 contribute to the NAD(+) site. The active-site N6-AMP-lysine intermediate is the Lys115. NAD(+)-binding residues include Arg136, Glu173, Lys290, and Lys314. The Zn(2+) site is built by Cys408, Cys411, Cys426, and Cys432. The BRCT domain maps to Glu593–Ser671.

Belongs to the NAD-dependent DNA ligase family. LigA subfamily. Mg(2+) serves as cofactor. Mn(2+) is required as a cofactor.

The enzyme catalyses NAD(+) + (deoxyribonucleotide)n-3'-hydroxyl + 5'-phospho-(deoxyribonucleotide)m = (deoxyribonucleotide)n+m + AMP + beta-nicotinamide D-nucleotide.. Functionally, DNA ligase that catalyzes the formation of phosphodiester linkages between 5'-phosphoryl and 3'-hydroxyl groups in double-stranded DNA using NAD as a coenzyme and as the energy source for the reaction. It is essential for DNA replication and repair of damaged DNA. This Escherichia coli O1:K1 / APEC protein is DNA ligase.